The following is a 188-amino-acid chain: Methylated-DNA--protein-cysteine methyltransferase (188 aa).

Tyr120, Gly121, and Arg134 together coordinate DNA. Cys151 (nucleophile; methyl group acceptor) is an active-site residue. A DNA-binding site is contributed by Ser157.

Belongs to the MGMT family.

It localises to the nucleus. The catalysed reaction is a 6-O-methyl-2'-deoxyguanosine in DNA + L-cysteinyl-[protein] = S-methyl-L-cysteinyl-[protein] + a 2'-deoxyguanosine in DNA. The enzyme catalyses a 4-O-methyl-thymidine in DNA + L-cysteinyl-[protein] = a thymidine in DNA + S-methyl-L-cysteinyl-[protein]. Its function is as follows. Involved in the cellular defense against the biological effects of O6-methylguanine (O6-MeG) and O4-methylthymine (O4-MeT) in DNA. Repairs the methylated nucleobase in DNA by stoichiometrically transferring the methyl group to a cysteine residue in the enzyme. This is a suicide reaction: the enzyme is irreversibly inactivated. Prefers double-stranded DNA over single-stranded DNA as substrate. The chain is Methylated-DNA--protein-cysteine methyltransferase (MGT1) from Saccharomyces cerevisiae (strain ATCC 204508 / S288c) (Baker's yeast).